A 22-amino-acid polypeptide reads, in one-letter code: Peptide PGLa-R1 (22 aa).

Leu22 carries the post-translational modification Leucine amide.

Expressed by the skin glands.

The protein resides in the secreted. Functionally, antimicrobial peptide. The sequence is that of Peptide PGLa-R1 from Xenopus ruwenzoriensis (Uganda clawed frog).